The chain runs to 282 residues: F-actin-capping protein subunit alpha (282 aa).

This sequence belongs to the F-actin-capping protein alpha subunit family. As to quaternary structure, component of the F-actin capping complex, composed of a heterodimer of an alpha and a beta subunit.

The protein resides in the cytoplasm. It is found in the cytoskeleton. Functionally, F-actin-capping proteins bind in a Ca(2+)-independent manner to the fast growing ends of actin filaments (barbed end) thereby blocking the exchange of subunits at these ends. Unlike other capping proteins (such as gelsolin and severin), these proteins do not sever actin filaments. The protein is F-actin-capping protein subunit alpha (cap-1) of Caenorhabditis elegans.